The primary structure comprises 90 residues: Acylphosphatase (90 aa).

One can recognise an Acylphosphatase-like domain in the interval 5–90 (CERFIVKGHV…YKPFRGFKIL (86 aa)). Residues R20 and N38 contribute to the active site.

Belongs to the acylphosphatase family.

It carries out the reaction an acyl phosphate + H2O = a carboxylate + phosphate + H(+). The sequence is that of Acylphosphatase (acyP) from Vibrio parahaemolyticus serotype O3:K6 (strain RIMD 2210633).